We begin with the raw amino-acid sequence, 620 residues long: Kelch-like protein 8 (620 aa).

Residues Met1 to Gln10 show a composition bias toward polar residues. The segment at Met1–Asp35 is disordered. Position 2 is an N-acetylalanine (Ala2). Residues Ala11–Gln22 show a composition bias toward basic residues. A compositionally biased stretch (polar residues) spans Gln23–Ser34. The region spanning Cys67–Val134 is the BTB domain. The BACK domain maps to Cys169–Val270. 6 Kelch repeats span residues Val319–Gly366, Lys367–Gly413, Ile415–Asn460, Val462–Gly507, Cys508–Gly554, and Ile556–Cys601.

In terms of assembly, component of the BCR(KLHL8) E3 ubiquitin ligase complex, at least composed of CUL3, KLHL8 and RBX1. Interacts with RAPSN.

It participates in protein modification; protein ubiquitination. In terms of biological role, substrate-specific adapter of a BCR (BTB-CUL3-RBX1) E3 ubiquitin ligase complex required for The BCR(KLHL8) ubiquitin ligase complex mediates ubiquitination and degradation of RAPSN. The polypeptide is Kelch-like protein 8 (KLHL8) (Homo sapiens (Human)).